A 76-amino-acid polypeptide reads, in one-letter code: ATP synthase subunit 9, mitochondrial (76 aa).

M1 is modified (N-formylmethionine). 2 helical membrane-spanning segments follow: residues I14–I34 and I52–L72.

F-type ATP synthases have 2 components, the catalytic core F(1) and the membrane-embedded component F(0), linked together by a central stalk and a peripheral stalk. The central stalk, also called rotor shaft, is often seen as part of F(1). The peripheral stalk is seen as part of F(0). F(0) contains the membrane channel next to the rotor. F-type ATP synthases form dimers but each monomer functions independently in ATP generation. The dimer consists of 18 different polypeptides: ATP1 (subunit alpha, part of F(1), 3 molecules per monomer), ATP2 (subunit beta, part of F(1), 3 molecules per monomer), ATP3 (subunit gamma, part of the central stalk), ATP4 (subunit b, part of the peripheral stalk), ATP5/OSCP (subunit 5/OSCP, part of the peripheral stalk), ATP6 (subunit a, part of the peripheral stalk), ATP7 (subunit d, part of the peripheral stalk), ATP8 (subunit 8, part of the peripheral stalk), OLI1 (subunit c, part of the rotor, 10 molecules per monomer), ATP14 (subunit h, part of the peripheral stalk), ATP15 (subunit epsilon, part of the central stalk), ATP16 (subunit delta, part of the central stalk), ATP17 (subunit f, part of the peripheral stalk), ATP18 (subunit i/j, part of the peripheral stalk). Dimer-specific subunits are ATP19 (subunit k, at interface between monomers), ATP20 (subunit g, at interface between monomers), TIM11 (subunit e, at interface between monomers). Also contains subunit L.

It localises to the mitochondrion inner membrane. Functionally, mitochondrial membrane ATP synthase (F(1)F(0) ATP synthase or Complex V) produces ATP from ADP in the presence of a proton gradient across the membrane which is generated by electron transport complexes of the respiratory chain. F-type ATP synthases consist of two structural domains, F(1) - containing the extramembraneous catalytic core, and F(0) - containing the membrane proton channel, linked together by a central stalk and a peripheral stalk. During catalysis, ATP synthesis in the catalytic domain of F(1) is coupled via a rotary mechanism of the central stalk subunits to proton translocation. Part of the complex F(0) domain. A homomeric c-ring of 10 OLI1/ATP9 subunits is part of the complex rotary element. In Pichia angusta (Yeast), this protein is ATP synthase subunit 9, mitochondrial.